We begin with the raw amino-acid sequence, 405 residues long: 3-hydroxy-3-methylglutaryl-coenzyme A reductase (405 aa).

Residues glutamate 100 and aspartate 310 each act as charge relay system in the active site. Catalysis depends on histidine 400, which acts as the Proton donor.

The protein belongs to the HMG-CoA reductase family.

The catalysed reaction is (R)-mevalonate + 2 NADP(+) + CoA = (3S)-3-hydroxy-3-methylglutaryl-CoA + 2 NADPH + 2 H(+). The protein operates within metabolic intermediate biosynthesis; (R)-mevalonate biosynthesis; (R)-mevalonate from acetyl-CoA: step 3/3. Its function is as follows. Converts HMG-CoA to mevalonate. This chain is 3-hydroxy-3-methylglutaryl-coenzyme A reductase (hmgA), found in Methanocaldococcus jannaschii (strain ATCC 43067 / DSM 2661 / JAL-1 / JCM 10045 / NBRC 100440) (Methanococcus jannaschii).